A 44-amino-acid polypeptide reads, in one-letter code: Antibacterial protein 3 (44 aa).

Met1 carries the post-translational modification N-formylmethionine.

The protein belongs to the staphylococcal hemolytic protein family.

The protein resides in the secreted. In terms of biological role, has hemolytic activity and also inhibits the growth of gonococci. In Staphylococcus haemolyticus, this protein is Antibacterial protein 3.